Reading from the N-terminus, the 302-residue chain is Recombination-associated protein RdgC (302 aa).

The protein belongs to the RdgC family.

The protein resides in the cytoplasm. Its subcellular location is the nucleoid. May be involved in recombination. The protein is Recombination-associated protein RdgC of Actinobacillus pleuropneumoniae serotype 7 (strain AP76).